A 348-amino-acid chain; its full sequence is MSDDKSKALAAALAQIEKSFGKGAIMKMDGSQQEENLEVISTGSLGLDLALGVGGLPRGRIVEIFGPESSGKTTLCLEAVAQCQKNGGVCAFVDAEHAFDPVYARKLGVKVEELYLSQPDTGEQALEICDTLVRSGGIDMVVVDSVAALVPKAEIEGDMGDSHVGLQARLMSQALRKLTGHIKKTNTLVVFINQIRMKIGVMFGSPETTTGGNALKFYSSVRLDIRRTGSIKKGEEVLGNETRVKVIKNKVAPPFRQAEFDILYGEGISWEGELIDIGVKNDIINKSGAWYSYNGAKIGQGKDNVRVWLKENPEVANEIDAKIRALNGVEMHITEGTQDETDGERPEE.

Position 66–73 (66–73 (GPESSGKT)) interacts with ATP.

This sequence belongs to the RecA family.

Its subcellular location is the cytoplasm. Can catalyze the hydrolysis of ATP in the presence of single-stranded DNA, the ATP-dependent uptake of single-stranded DNA by duplex DNA, and the ATP-dependent hybridization of homologous single-stranded DNAs. It interacts with LexA causing its activation and leading to its autocatalytic cleavage. The chain is Protein RecA from Neisseria meningitidis serogroup B (strain ATCC BAA-335 / MC58).